We begin with the raw amino-acid sequence, 225 residues long: ATP-dependent dethiobiotin synthetase BioD 1 (225 aa).

An ATP-binding site is contributed by 13–18 (EVGKTV). Thr17 contacts Mg(2+). Residue Lys38 is part of the active site. Position 42 (Ser42) interacts with substrate. ATP-binding positions include Asp55, 116-119 (EGAG), 176-177 (ND), 205-207 (PWL), and Glu212. Residues Asp55 and Glu116 each contribute to the Mg(2+) site.

This sequence belongs to the dethiobiotin synthetase family. As to quaternary structure, homodimer. Requires Mg(2+) as cofactor.

It localises to the cytoplasm. The catalysed reaction is (7R,8S)-7,8-diammoniononanoate + CO2 + ATP = (4R,5S)-dethiobiotin + ADP + phosphate + 3 H(+). The protein operates within cofactor biosynthesis; biotin biosynthesis; biotin from 7,8-diaminononanoate: step 1/2. Its function is as follows. Catalyzes a mechanistically unusual reaction, the ATP-dependent insertion of CO2 between the N7 and N8 nitrogen atoms of 7,8-diaminopelargonic acid (DAPA, also called 7,8-diammoniononanoate) to form a ureido ring. The sequence is that of ATP-dependent dethiobiotin synthetase BioD 1 from Escherichia coli O157:H7.